A 599-amino-acid polypeptide reads, in one-letter code: Translation initiation factor IF-2 (599 aa).

The region spanning 111 to 278 (PRPPIITVMG…SILLLAEILE (168 aa)) is the tr-type G domain. The G1 stretch occupies residues 120–127 (GHVDHGKT). Residue 120–127 (GHVDHGKT) participates in GTP binding. A G2 region spans residues 145–149 (GITQH). The segment at 166–169 (DTPG) is G3. Residues 166–170 (DTPGH) and 220–223 (NKMD) each bind GTP. Residues 220-223 (NKMD) form a G4 region. The interval 256–258 (SAL) is G5.

The protein belongs to the TRAFAC class translation factor GTPase superfamily. Classic translation factor GTPase family. IF-2 subfamily.

Its subcellular location is the cytoplasm. In terms of biological role, one of the essential components for the initiation of protein synthesis. Protects formylmethionyl-tRNA from spontaneous hydrolysis and promotes its binding to the 30S ribosomal subunits. Also involved in the hydrolysis of GTP during the formation of the 70S ribosomal complex. The polypeptide is Translation initiation factor IF-2 (Mesomycoplasma hyopneumoniae (strain 7448) (Mycoplasma hyopneumoniae)).